A 460-amino-acid polypeptide reads, in one-letter code: Bifunctional protein GlmU (460 aa).

Positions 1–229 are pyrophosphorylase; sequence MTNYAIILAA…FNESLGVNDR (229 aa). Residues 8–11, Lys-22, Gln-72, and 77–78 each bind UDP-N-acetyl-alpha-D-glucosamine; these read LAAG and GT. Position 102 (Asp-102) interacts with Mg(2+). Positions 139, 154, 169, and 227 each coordinate UDP-N-acetyl-alpha-D-glucosamine. A Mg(2+)-binding site is contributed by Asn-227. Residues 230 to 250 form a linker region; sequence VALATAETVMRQRITQKHMVN. The segment at 251–460 is N-acetyltransferase; that stretch reads GVTFQNPETV…RLAHHPSRSK (210 aa). UDP-N-acetyl-alpha-D-glucosamine is bound by residues Arg-332 and Lys-350. His-362 (proton acceptor) is an active-site residue. 2 residues coordinate UDP-N-acetyl-alpha-D-glucosamine: Tyr-365 and Asn-376. Acetyl-CoA is bound by residues Ala-379, 385–386, Ser-404, Ala-422, and Arg-439; that span reads NY.

In the N-terminal section; belongs to the N-acetylglucosamine-1-phosphate uridyltransferase family. This sequence in the C-terminal section; belongs to the transferase hexapeptide repeat family. Homotrimer. Mg(2+) serves as cofactor.

Its subcellular location is the cytoplasm. The catalysed reaction is alpha-D-glucosamine 1-phosphate + acetyl-CoA = N-acetyl-alpha-D-glucosamine 1-phosphate + CoA + H(+). It catalyses the reaction N-acetyl-alpha-D-glucosamine 1-phosphate + UTP + H(+) = UDP-N-acetyl-alpha-D-glucosamine + diphosphate. Its pathway is nucleotide-sugar biosynthesis; UDP-N-acetyl-alpha-D-glucosamine biosynthesis; N-acetyl-alpha-D-glucosamine 1-phosphate from alpha-D-glucosamine 6-phosphate (route II): step 2/2. The protein operates within nucleotide-sugar biosynthesis; UDP-N-acetyl-alpha-D-glucosamine biosynthesis; UDP-N-acetyl-alpha-D-glucosamine from N-acetyl-alpha-D-glucosamine 1-phosphate: step 1/1. It functions in the pathway bacterial outer membrane biogenesis; LPS lipid A biosynthesis. Functionally, catalyzes the last two sequential reactions in the de novo biosynthetic pathway for UDP-N-acetylglucosamine (UDP-GlcNAc). The C-terminal domain catalyzes the transfer of acetyl group from acetyl coenzyme A to glucosamine-1-phosphate (GlcN-1-P) to produce N-acetylglucosamine-1-phosphate (GlcNAc-1-P), which is converted into UDP-GlcNAc by the transfer of uridine 5-monophosphate (from uridine 5-triphosphate), a reaction catalyzed by the N-terminal domain. The polypeptide is Bifunctional protein GlmU (Streptococcus pyogenes serotype M18 (strain MGAS8232)).